We begin with the raw amino-acid sequence, 836 residues long: Eukaryotic translation initiation factor 3 subunit C (836 aa).

The segment at 1–97 (MSRFFVSGYD…RRVVKSAKEK (97 aa)) is disordered. Residues 13 to 55 (SSSEEEDLLTSSEEELMSSEQESDSEFDDEFANDDDSDSSDSD) are compositionally biased toward acidic residues. Residues 86-97 (EGRRVVKSAKEK) show a composition bias toward basic and acidic residues. Residues 586-761 (FHMHINLELL…KSINFVSSEH (176 aa)) form the PCI domain. A disordered region spans residues 783 to 817 (DKNEKTASNGHGRKTTQQQQQQQQKEQREQTHDEN). A compositionally biased stretch (low complexity) spans 797 to 806 (TTQQQQQQQQ). Positions 807 to 817 (KEQREQTHDEN) are enriched in basic and acidic residues.

The protein belongs to the eIF-3 subunit C family. In terms of assembly, component of the eukaryotic translation initiation factor 3 (eIF-3) complex.

It localises to the cytoplasm. Its function is as follows. Component of the eukaryotic translation initiation factor 3 (eIF-3) complex, which is involved in protein synthesis of a specialized repertoire of mRNAs and, together with other initiation factors, stimulates binding of mRNA and methionyl-tRNAi to the 40S ribosome. The eIF-3 complex specifically targets and initiates translation of a subset of mRNAs involved in cell proliferation. The protein is Eukaryotic translation initiation factor 3 subunit C of Meyerozyma guilliermondii (strain ATCC 6260 / CBS 566 / DSM 6381 / JCM 1539 / NBRC 10279 / NRRL Y-324) (Yeast).